A 219-amino-acid polypeptide reads, in one-letter code: Ribosome maturation factor RimP (219 aa).

Residues 195–219 are disordered; sequence EGRIPGDDLGAEPEDAASTETQEKK.

It belongs to the RimP family.

The protein localises to the cytoplasm. In terms of biological role, required for maturation of 30S ribosomal subunits. This chain is Ribosome maturation factor RimP, found in Brucella melitensis biotype 2 (strain ATCC 23457).